The chain runs to 929 residues: Protein translocase subunit SecA (929 aa).

ATP contacts are provided by residues Q87, G105–T109, and D512. Zn(2+) contacts are provided by C914, C916, C925, and H926.

It belongs to the SecA family. Monomer and homodimer. Part of the essential Sec protein translocation apparatus which comprises SecA, SecYEG and auxiliary proteins SecDF-YajC and YidC. Requires Zn(2+) as cofactor.

The protein resides in the cell inner membrane. It localises to the cytoplasm. The catalysed reaction is ATP + H2O + cellular proteinSide 1 = ADP + phosphate + cellular proteinSide 2.. Its function is as follows. Part of the Sec protein translocase complex. Interacts with the SecYEG preprotein conducting channel. Has a central role in coupling the hydrolysis of ATP to the transfer of proteins into and across the cell membrane, serving both as a receptor for the preprotein-SecB complex and as an ATP-driven molecular motor driving the stepwise translocation of polypeptide chains across the membrane. The sequence is that of Protein translocase subunit SecA from Psychrobacter arcticus (strain DSM 17307 / VKM B-2377 / 273-4).